Reading from the N-terminus, the 441-residue chain is Ribosomal protein uS12 methylthiotransferase RimO (441 aa).

The MTTase N-terminal domain occupies P8–P118. C17, C53, C82, C150, C154, and C157 together coordinate [4Fe-4S] cluster. In terms of domain architecture, Radical SAM core spans L136–E373. Positions Q376 to V441 constitute a TRAM domain.

The protein belongs to the methylthiotransferase family. RimO subfamily. Requires [4Fe-4S] cluster as cofactor.

It localises to the cytoplasm. The enzyme catalyses L-aspartate(89)-[ribosomal protein uS12]-hydrogen + (sulfur carrier)-SH + AH2 + 2 S-adenosyl-L-methionine = 3-methylsulfanyl-L-aspartate(89)-[ribosomal protein uS12]-hydrogen + (sulfur carrier)-H + 5'-deoxyadenosine + L-methionine + A + S-adenosyl-L-homocysteine + 2 H(+). Catalyzes the methylthiolation of an aspartic acid residue of ribosomal protein uS12. The chain is Ribosomal protein uS12 methylthiotransferase RimO from Klebsiella pneumoniae subsp. pneumoniae (strain ATCC 700721 / MGH 78578).